A 618-amino-acid chain; its full sequence is Serine/threonine-protein kinase pkn1 (618 aa).

Positions 15 to 381 constitute a Protein kinase domain; it reads YKILCYLRKG…KEEVKPQPLF (367 aa). ATP is bound by residues 21-29 and Lys44; that span reads LRKGLWCQD.

This sequence belongs to the protein kinase superfamily. Ser/Thr protein kinase family. Post-translationally, autophosphorylated on serine and threonine residues.

It carries out the reaction L-seryl-[protein] + ATP = O-phospho-L-seryl-[protein] + ADP + H(+). The catalysed reaction is L-threonyl-[protein] + ATP = O-phospho-L-threonyl-[protein] + ADP + H(+). Its function is as follows. Together with the serine/threonine kinase PknD, may play a role in the specific interactions with host proteins during intracellular growth. In Chlamydia caviae (strain ATCC VR-813 / DSM 19441 / 03DC25 / GPIC) (Chlamydophila caviae), this protein is Serine/threonine-protein kinase pkn1 (pkn1).